Here is a 152-residue protein sequence, read N- to C-terminus: Transcriptional regulator MraZ (152 aa).

SpoVT-AbrB domains are found at residues 5–52 (ATLV…PLPE) and 81–124 (ASEC…DETT).

Belongs to the MraZ family. Forms oligomers.

Its subcellular location is the cytoplasm. It is found in the nucleoid. Its function is as follows. Negatively regulates its own expression and that of the subsequent genes in the proximal part of the division and cell wall (dcw) gene cluster. Acts by binding directly to DNA. May also regulate the expression of genes outside the dcw cluster. This is Transcriptional regulator MraZ from Escherichia fergusonii (strain ATCC 35469 / DSM 13698 / CCUG 18766 / IAM 14443 / JCM 21226 / LMG 7866 / NBRC 102419 / NCTC 12128 / CDC 0568-73).